An 82-amino-acid polypeptide reads, in one-letter code: Sec-independent protein translocase protein TatA (82 aa).

A helical membrane pass occupies residues 1–21 (MGSFSIWHWLIVLLVVVMIFG). A disordered region spans residues 39–82 (FKDGMKDGSTTDAPAASSAPAAQVTGQPANSDKSTIDVEARQKS). The segment covering 51-60 (APAASSAPAA) has biased composition (low complexity). The segment covering 62–71 (VTGQPANSDK) has biased composition (polar residues). Basic and acidic residues predominate over residues 72–82 (STIDVEARQKS).

Belongs to the TatA/E family. In terms of assembly, the Tat system comprises two distinct complexes: a TatABC complex, containing multiple copies of TatA, TatB and TatC subunits, and a separate TatA complex, containing only TatA subunits. Substrates initially bind to the TatABC complex, which probably triggers association of the separate TatA complex to form the active translocon.

The protein resides in the cell inner membrane. Its function is as follows. Part of the twin-arginine translocation (Tat) system that transports large folded proteins containing a characteristic twin-arginine motif in their signal peptide across membranes. TatA could form the protein-conducting channel of the Tat system. This is Sec-independent protein translocase protein TatA from Variovorax paradoxus (strain S110).